The following is a 194-amino-acid chain: MIGRLRGILAYKQPPWLVIDVGGVGYELEAPMSTFYDLPDVGRDVILFTHYAQKEDSVSLYGFLREGERRLFRDVQKVTGIGAKIALAVLSGVTVDEFARLITSGDITALTRIPGIGKKTAERMVVELRDRAADFSSGAPITGQLGPDAVSEATVALQQLGYKPAEAARMAREAGAEGDEVATVIRKALQAALR.

Residues 1–64 form a domain I region; that stretch reads MIGRLRGILA…EDSVSLYGFL (64 aa). Residues 65–140 are domain II; sequence REGERRLFRD…RAADFSSGAP (76 aa). The flexible linker stretch occupies residues 140 to 144; the sequence is PITGQ. Positions 145-194 are domain III; it reads LGPDAVSEATVALQQLGYKPAEAARMAREAGAEGDEVATVIRKALQAALR.

Belongs to the RuvA family. In terms of assembly, homotetramer. Forms an RuvA(8)-RuvB(12)-Holliday junction (HJ) complex. HJ DNA is sandwiched between 2 RuvA tetramers; dsDNA enters through RuvA and exits via RuvB. An RuvB hexamer assembles on each DNA strand where it exits the tetramer. Each RuvB hexamer is contacted by two RuvA subunits (via domain III) on 2 adjacent RuvB subunits; this complex drives branch migration. In the full resolvosome a probable DNA-RuvA(4)-RuvB(12)-RuvC(2) complex forms which resolves the HJ.

The protein localises to the cytoplasm. Its function is as follows. The RuvA-RuvB-RuvC complex processes Holliday junction (HJ) DNA during genetic recombination and DNA repair, while the RuvA-RuvB complex plays an important role in the rescue of blocked DNA replication forks via replication fork reversal (RFR). RuvA specifically binds to HJ cruciform DNA, conferring on it an open structure. The RuvB hexamer acts as an ATP-dependent pump, pulling dsDNA into and through the RuvAB complex. HJ branch migration allows RuvC to scan DNA until it finds its consensus sequence, where it cleaves and resolves the cruciform DNA. This Xanthomonas campestris pv. campestris (strain 8004) protein is Holliday junction branch migration complex subunit RuvA.